Consider the following 123-residue polypeptide: SGSCTTKTCWTTLPPFRLVGNILKQKYEKPVQVEPVRARRTRRPAFLKIKDIKNFKKPRPTDMVYLQRSPNYCDRDPRVGSLGTVGRQCNRTSIGTDSCDLMCCGRGYNTHQYTRIWQCNCKF.

Residue serine 1 is the site of O-palmitoleoyl serine; by PORCN attachment. Cysteine 89 and cysteine 104 are joined by a disulfide. Asparagine 90 carries an N-linked (GlcNAc...) asparagine glycan.

The protein belongs to the Wnt family. Post-translationally, palmitoleoylation is required for efficient binding to frizzled receptors. Depalmitoleoylation leads to Wnt signaling pathway inhibition.

It localises to the secreted. It is found in the extracellular space. Its subcellular location is the extracellular matrix. Its function is as follows. Ligand for members of the frizzled family of seven transmembrane receptors. Probable developmental protein. May be a signaling molecule which affects the development of discrete regions of tissues. Is likely to signal over only few cell diameters. This Evasterias troschelii (Mottled sea star) protein is Protein Wnt-7 (WNT-7).